Here is a 428-residue protein sequence, read N- to C-terminus: Histidinol dehydrogenase (428 aa).

NAD(+) is bound by residues Tyr-125, Gln-186, and Asn-209. The substrate site is built by Ser-232, Gln-254, and His-257. Zn(2+)-binding residues include Gln-254 and His-257. Catalysis depends on proton acceptor residues Glu-322 and His-323. 4 residues coordinate substrate: His-323, Asp-356, Glu-410, and His-415. Asp-356 provides a ligand contact to Zn(2+). Position 415 (His-415) interacts with Zn(2+).

The protein belongs to the histidinol dehydrogenase family. Zn(2+) serves as cofactor.

It catalyses the reaction L-histidinol + 2 NAD(+) + H2O = L-histidine + 2 NADH + 3 H(+). It functions in the pathway amino-acid biosynthesis; L-histidine biosynthesis; L-histidine from 5-phospho-alpha-D-ribose 1-diphosphate: step 9/9. Functionally, catalyzes the sequential NAD-dependent oxidations of L-histidinol to L-histidinaldehyde and then to L-histidine. The chain is Histidinol dehydrogenase from Lactiplantibacillus plantarum (strain ATCC BAA-793 / NCIMB 8826 / WCFS1) (Lactobacillus plantarum).